The sequence spans 163 residues: uncharacterized protein (163 aa).

Residues 1–10 (MTHPLPHDSH) are compositionally biased toward basic and acidic residues. Disordered stretches follow at residues 1 to 21 (MTHPLPHDSHTSGAPPLVNKS) and 71 to 112 (SKQP…EQRR). The segment covering 90–105 (PASSLQDHSRLTSLSR) has biased composition (polar residues).

This is an uncharacterized protein from Homo sapiens (Human).